A 325-amino-acid polypeptide reads, in one-letter code: tRNA U34 carboxymethyltransferase (325 aa).

Residues lysine 91, tryptophan 105, lysine 110, glycine 130, 152–154, methionine 196, tyrosine 200, and arginine 315 contribute to the carboxy-S-adenosyl-L-methionine site; that span reads DPS.

Belongs to the class I-like SAM-binding methyltransferase superfamily. CmoB family. As to quaternary structure, homotetramer.

The enzyme catalyses carboxy-S-adenosyl-L-methionine + 5-hydroxyuridine(34) in tRNA = 5-carboxymethoxyuridine(34) in tRNA + S-adenosyl-L-homocysteine + H(+). Its function is as follows. Catalyzes carboxymethyl transfer from carboxy-S-adenosyl-L-methionine (Cx-SAM) to 5-hydroxyuridine (ho5U) to form 5-carboxymethoxyuridine (cmo5U) at position 34 in tRNAs. This is tRNA U34 carboxymethyltransferase from Aeromonas hydrophila subsp. hydrophila (strain ATCC 7966 / DSM 30187 / BCRC 13018 / CCUG 14551 / JCM 1027 / KCTC 2358 / NCIMB 9240 / NCTC 8049).